Consider the following 537-residue polypeptide: Putative cysteine ligase BshC (537 aa).

The stretch at 415 to 439 (EKASNNFINEVEEMKIQQQELYNNL) forms a coiled coil.

Belongs to the BshC family.

Functionally, involved in bacillithiol (BSH) biosynthesis. May catalyze the last step of the pathway, the addition of cysteine to glucosamine malate (GlcN-Mal) to generate BSH. The chain is Putative cysteine ligase BshC from Staphylococcus epidermidis (strain ATCC 12228 / FDA PCI 1200).